Here is a 134-residue protein sequence, read N- to C-terminus: ATP synthase epsilon chain (134 aa).

It belongs to the ATPase epsilon chain family. As to quaternary structure, F-type ATPases have 2 components, CF(1) - the catalytic core - and CF(0) - the membrane proton channel. CF(1) has five subunits: alpha(3), beta(3), gamma(1), delta(1), epsilon(1). CF(0) has three main subunits: a, b and c.

The protein localises to the cell membrane. Its function is as follows. Produces ATP from ADP in the presence of a proton gradient across the membrane. In Staphylococcus aureus (strain USA300), this protein is ATP synthase epsilon chain.